We begin with the raw amino-acid sequence, 569 residues long: Glutamate--tRNA ligase (569 aa).

The 'HIGH' region motif lies at 110–120 (PNPNGPPTLGS).

It belongs to the class-I aminoacyl-tRNA synthetase family. Glutamate--tRNA ligase type 2 subfamily.

The protein localises to the cytoplasm. The catalysed reaction is tRNA(Glu) + L-glutamate + ATP = L-glutamyl-tRNA(Glu) + AMP + diphosphate. In terms of biological role, catalyzes the attachment of glutamate to tRNA(Glu) in a two-step reaction: glutamate is first activated by ATP to form Glu-AMP and then transferred to the acceptor end of tRNA(Glu). This chain is Glutamate--tRNA ligase, found in Methanococcoides burtonii (strain DSM 6242 / NBRC 107633 / OCM 468 / ACE-M).